We begin with the raw amino-acid sequence, 854 residues long: DNA mismatch repair protein MutS (854 aa).

614–621 (GPNMGGKS) contributes to the ATP binding site.

Belongs to the DNA mismatch repair MutS family.

Its function is as follows. This protein is involved in the repair of mismatches in DNA. It is possible that it carries out the mismatch recognition step. This protein has a weak ATPase activity. This Yersinia pestis bv. Antiqua (strain Antiqua) protein is DNA mismatch repair protein MutS.